Consider the following 241-residue polypeptide: Ureidoacrylate amidohydrolase RutB (241 aa).

Asp38 (proton acceptor) is an active-site residue. Lys147 is a catalytic residue. Cys180 serves as the catalytic Nucleophile.

Belongs to the isochorismatase family. RutB subfamily.

The catalysed reaction is (Z)-3-ureidoacrylate + H2O + H(+) = (Z)-3-aminoacrylate + NH4(+) + CO2. The enzyme catalyses (Z)-3-ureidoacrylate + H2O = (Z)-3-aminoacrylate + carbamate + H(+). It catalyses the reaction (Z)-2-methylureidoacrylate + H2O + H(+) = (Z)-2-methylaminoacrylate + NH4(+) + CO2. Its function is as follows. Hydrolyzes ureidoacrylate to form aminoacrylate and carbamate. The carbamate hydrolyzes spontaneously, thereby releasing one of the nitrogen atoms of the pyrimidine ring as ammonia and one of its carbon atoms as CO2. This is Ureidoacrylate amidohydrolase RutB from Haliangium ochraceum (strain DSM 14365 / JCM 11303 / SMP-2).